A 149-amino-acid polypeptide reads, in one-letter code: Cytochrome c-type biogenesis protein CcmE (149 aa).

At 1-8 the chain is on the cytoplasmic side; the sequence is MNPKRKQR. A helical; Signal-anchor for type II membrane protein transmembrane segment spans residues 9-29; it reads LIIVSFLVIGVSATVGLIMAA. Over 30–149 the chain is Periplasmic; that stretch reads LSSNVNHFYN…AQDAAPAQTY (120 aa). The heme site is built by His124 and Tyr128.

Belongs to the CcmE/CycJ family.

Its subcellular location is the cell inner membrane. Heme chaperone required for the biogenesis of c-type cytochromes. Transiently binds heme delivered by CcmC and transfers the heme to apo-cytochromes in a process facilitated by CcmF and CcmH. The protein is Cytochrome c-type biogenesis protein CcmE of Hahella chejuensis (strain KCTC 2396).